Reading from the N-terminus, the 959-residue chain is Autophagy-related protein 18g (959 aa).

2 WD repeats span residues 376-416 (AHTS…SHNA) and 438-479 (ITSA…AAFQ). The disordered stretch occupies residues 802-832 (GSIESAESSEEGSTKQMENLHDSDHMSNSIK).

The protein belongs to the WD repeat PROPPIN family. In terms of assembly, component of the PI(3,5)P2 regulatory complex at least composed of ATG18, SAC/FIG4, FAB1 and VAC14. In terms of tissue distribution, expressed in leaves.

The protein localises to the preautophagosomal structure membrane. It is found in the vacuole membrane. Functionally, the PI(3,5)P2 regulatory complex regulates both the synthesis and turnover of phosphatidylinositol 3,5-bisphosphate (PtdIns(3,5)P2). Required for autophagy. The polypeptide is Autophagy-related protein 18g (ATG18G) (Arabidopsis thaliana (Mouse-ear cress)).